A 143-amino-acid polypeptide reads, in one-letter code: Root meristem growth factor 10 (143 aa).

Residues 1-27 (MDMLRSACFYFLLIVFVILSWSLLCDS) form the signal peptide. A propeptide spanning residues 28-130 (RHLGHMEKKL…SDQEHPGFNL (103 aa)) is cleaved from the precursor. A glycan (N-linked (GlcNAc...) asparagine) is linked at N60. Residues 74–83 (NHGDNGQING) show a composition bias toward polar residues. The interval 74 to 143 (NHGDNGQING…QPTTHPPHHN (70 aa)) is disordered. The Nuclear localization signal motif lies at 92 to 99 (VKRASDKK). At Y132 the chain carries Sulfotyrosine. P140 is subject to Hydroxyproline.

The protein belongs to the RGF family. In terms of assembly, binds to LRR receptor-like serine/threonine-protein kinases RGI1, RGI2 and RGI3 to trigger their dimerization with SERK proteins and subsequent signaling. The tyrosine sulfation is critical for the function of the peptide. Expressed in root tips.

It is found in the secreted. The protein resides in the nucleus. Maintains the postembryonic root stem cell niche by regulating the expression levels and patterns of the transcription factor PLETHORA (PLT), mainly at the post-transcriptional level. Promotes root elongation. The chain is Root meristem growth factor 10 from Arabidopsis thaliana (Mouse-ear cress).